The following is a 112-amino-acid chain: uncharacterized protein (112 aa).

Residues 75 to 95 (ILGVFGGFIYILTPLPIVSGF) traverse the membrane as a helical segment.

It localises to the membrane. This is an uncharacterized protein from Methanocaldococcus jannaschii (strain ATCC 43067 / DSM 2661 / JAL-1 / JCM 10045 / NBRC 100440) (Methanococcus jannaschii).